The following is a 363-amino-acid chain: 3-isopropylmalate dehydrogenase (363 aa).

78–91 serves as a coordination point for NAD(+); sequence GPKWEHLPPDQQPE. Substrate contacts are provided by arginine 99, arginine 109, arginine 138, and aspartate 227. Positions 227, 251, and 255 each coordinate Mg(2+). Residue 285-297 coordinates NAD(+); it reads GSAPDIAGKNIAN.

It belongs to the isocitrate and isopropylmalate dehydrogenases family. LeuB type 1 subfamily. Homodimer. It depends on Mg(2+) as a cofactor. Mn(2+) serves as cofactor.

It localises to the cytoplasm. It catalyses the reaction (2R,3S)-3-isopropylmalate + NAD(+) = 4-methyl-2-oxopentanoate + CO2 + NADH. The protein operates within amino-acid biosynthesis; L-leucine biosynthesis; L-leucine from 3-methyl-2-oxobutanoate: step 3/4. Functionally, catalyzes the oxidation of 3-carboxy-2-hydroxy-4-methylpentanoate (3-isopropylmalate) to 3-carboxy-4-methyl-2-oxopentanoate. The product decarboxylates to 4-methyl-2 oxopentanoate. The sequence is that of 3-isopropylmalate dehydrogenase from Shigella flexneri.